Consider the following 501-residue polypeptide: Proline--tRNA ligase (501 aa).

It belongs to the class-II aminoacyl-tRNA synthetase family. ProS type 3 subfamily. Homodimer.

It localises to the cytoplasm. It carries out the reaction tRNA(Pro) + L-proline + ATP = L-prolyl-tRNA(Pro) + AMP + diphosphate. Functionally, catalyzes the attachment of proline to tRNA(Pro) in a two-step reaction: proline is first activated by ATP to form Pro-AMP and then transferred to the acceptor end of tRNA(Pro). This is Proline--tRNA ligase from Halobacterium salinarum (strain ATCC 29341 / DSM 671 / R1).